The following is a 217-amino-acid chain: MTVENTALTLKKRFRGYFPVVVDVETAGFNAQTDALLEICAVTLSMDENGDLHPASTIHFHVEPFEGANLEKEALEFNGIRDPFSPLRGAVTEQEALKEIYKLIRREQKAADCSRAIMVAHNAAFDLSFVNAANERCKLKRVPFHPFATFDTATLSGLAYGQTVLAKACKTAGMEFDNREAHSALYDTEKTAELFCGIVNKWKALGGWPLIEDENEK.

Positions valine 20–phenylalanine 195 constitute an Exonuclease domain. The Mg(2+) site is built by aspartate 23, glutamate 25, histidine 182, and aspartate 187. The active-site Proton donor/acceptor is the histidine 182.

It belongs to the RNase T family. In terms of assembly, homodimer. The cofactor is Mg(2+).

In terms of biological role, trims short 3' overhangs of a variety of RNA species, leaving a one or two nucleotide 3' overhang. Responsible for the end-turnover of tRNA: specifically removes the terminal AMP residue from uncharged tRNA (tRNA-C-C-A). Also appears to be involved in tRNA biosynthesis. In Vibrio vulnificus (strain YJ016), this protein is Ribonuclease T.